Reading from the N-terminus, the 378-residue chain is Probable dihydroorotase-like protein (378 aa).

Belongs to the metallo-dependent hydrolases superfamily. DHOase family. PyrC' subfamily.

Its function is as follows. Non-functional DHOase. This chain is Probable dihydroorotase-like protein (pyrC'), found in Helicobacter pylori (strain ATCC 700392 / 26695) (Campylobacter pylori).